The sequence spans 465 residues: Glutamate--tRNA ligase (465 aa).

Positions 8–18 match the 'HIGH' region motif; sequence PSPTGYLHIGG. The 'KMSKS' region signature appears at 236–240; sequence RLSKR. Lysine 239 contacts ATP.

The protein belongs to the class-I aminoacyl-tRNA synthetase family. Glutamate--tRNA ligase type 1 subfamily. As to quaternary structure, monomer.

It is found in the cytoplasm. It catalyses the reaction tRNA(Glu) + L-glutamate + ATP = L-glutamyl-tRNA(Glu) + AMP + diphosphate. Its function is as follows. Catalyzes the attachment of glutamate to tRNA(Glu) in a two-step reaction: glutamate is first activated by ATP to form Glu-AMP and then transferred to the acceptor end of tRNA(Glu). This is Glutamate--tRNA ligase from Nitrosospira multiformis (strain ATCC 25196 / NCIMB 11849 / C 71).